The following is an 866-amino-acid chain: Phospholipase D gamma 3 (866 aa).

The C2 domain maps to 31–170 (PFDTSSGSLR…CSGNRIEGLF (140 aa)). D232 contributes to the Ca(2+) binding site. Positions 371–406 (TIYTHHQKTMIVDAEAAQNRRKIVAFVGGLDLCNGR) constitute a PLD phosphodiesterase 1 domain. Residues H376, K378, and D383 contribute to the active site. Position 376 (H376) interacts with a 1,2-diacyl-sn-glycero-3-phosphate. 2 residues coordinate Ca(2+): H412 and H444. Q572 serves as a coordination point for a 1,2-diacyl-sn-glycero-3-phosphate. Residue S692 is modified to Phosphoserine. Positions 712 to 739 (FMIYVHSKGMVVDDEFVLIGSANINQRS) constitute a PLD phosphodiesterase 2 domain. Residues H717, K719, and D724 contribute to the active site. H717 is an a 1,2-diacyl-sn-glycero-3-phosphate binding site. Residue E780 coordinates Ca(2+).

This sequence belongs to the phospholipase D family. C2-PLD subfamily. Ca(2+) is required as a cofactor. In terms of tissue distribution, highly expressed in inflorescences and old leaves, moderately in stems, roots, siliques and young leaves and low in flowers.

It is found in the cytoplasm. Its subcellular location is the membrane. The catalysed reaction is a 1,2-diacyl-sn-glycero-3-phosphocholine + H2O = a 1,2-diacyl-sn-glycero-3-phosphate + choline + H(+). Inhibited by neomycin. Functionally, hydrolyzes glycerol-phospholipids at the terminal phosphodiesteric bond to generate phosphatidic acids (PA). Plays an important role in various cellular processes, including phytohormone action, vesicular trafficking, secretion, cytoskeletal arrangement, meiosis, tumor promotion, pathogenesis, membrane deterioration and senescence. Can use phosphatidylserine but prefers ethanolamine-containing lipids as substrates. This is Phospholipase D gamma 3 from Arabidopsis thaliana (Mouse-ear cress).